A 248-amino-acid polypeptide reads, in one-letter code: Caffeoyl-CoA O-methyltransferase 3 (248 aa).

Residue Lys-22 participates in substrate binding. Residues Thr-64, Glu-86, 88–89, Ser-94, Asp-112, and Ala-141 each bind S-adenosyl-L-methionine; that span reads GV. Asp-164 is a binding site for substrate. Asp-164 is an a divalent metal cation binding site. An S-adenosyl-L-methionine-binding site is contributed by Asp-166. Residues Asp-190 and Asn-191 each contribute to the a divalent metal cation site. Asn-195 is a substrate binding site.

Belongs to the class I-like SAM-binding methyltransferase superfamily. Cation-dependent O-methyltransferase family. CCoAMT subfamily. The cofactor is a divalent metal cation. As to expression, mostly expressed in petal limbs and tubes, and, at low levels, in stems, roots and leaves.

It is found in the cytoplasm. It localises to the cytosol. It catalyses the reaction (E)-caffeoyl-CoA + S-adenosyl-L-methionine = (E)-feruloyl-CoA + S-adenosyl-L-homocysteine + H(+). The enzyme catalyses (E)-5-hydroxyferuloyl-CoA + S-adenosyl-L-methionine = (E)-sinapoyl-CoA + S-adenosyl-L-homocysteine + H(+). The protein operates within aromatic compound metabolism; phenylpropanoid biosynthesis. Involved in the production of floral volatile phenylpropanoids in flowers of fragrant cultivars (e.g. cv. Mitchell and cv. V26) from cinnamic acid, a common precursor with the anthocyanin biosynthesis pathway involved in flower pigmentation. Methylates caffeoyl-CoA to feruloyl-CoA, also able to methylate 5-hydroxyferuloyl-CoA. The sequence is that of Caffeoyl-CoA O-methyltransferase 3 from Petunia hybrida (Petunia).